The sequence spans 657 residues: Bifunctional lysine-specific demethylase and histidyl-hydroxylase NO66 (657 aa).

Disordered stretches follow at residues 1 to 141 (MQKA…QTSP) and 165 to 198 (KSCPLPSKKDSVTKSPMTVHEAPKVDSATSNSNE). Residues 32 to 41 (SAKTVDTVTD) show a composition bias toward polar residues. Residues 55–71 (AEKERRKYLQARVRAEG) show a composition bias toward basic and acidic residues. Polar residues-rich tracts occupy residues 73–84 (SASTSSKSNATR) and 132–141 (RSQGLEQTSP). Ser133 is modified (phosphoserine). Residue Thr139 is modified to Phosphothreonine. Ser140 is modified (phosphoserine). Positions 315–454 (NPSTYLLGLR…NLLETLMPIV (140 aa)) constitute a JmjC domain. Residues His355, Asp357, and His420 each contribute to the Fe cation site.

The protein belongs to the ROX family. NO66 subfamily. Requires Fe(2+) as cofactor.

The protein resides in the nucleus. It carries out the reaction N(6),N(6)-dimethyl-L-lysyl(36)-[histone H3] + 2 2-oxoglutarate + 2 O2 = L-lysyl(36)-[histone H3] + 2 formaldehyde + 2 succinate + 2 CO2. In terms of biological role, oxygenase that can act as both a histone lysine demethylase and a ribosomal histidine hydroxylase. Specifically demethylates 'Lys-4' (H3K4me) and 'Lys-36' (H3K36me) of histone H3, thereby playing a central role in histone code. In Drosophila erecta (Fruit fly), this protein is Bifunctional lysine-specific demethylase and histidyl-hydroxylase NO66.